A 345-amino-acid chain; its full sequence is Cysteinyl leukotriene receptor 2 (345 aa).

Over 1–43 the chain is Extracellular; it reads MERKLMSLLPSISLSEMEPNSTLGNHNSNRSCTTENFKREFYP. 2 N-linked (GlcNAc...) asparagine glycosylation sites follow: Asn-20 and Asn-29. The helical transmembrane segment at 44–64 threads the bilayer; sequence IVYLVIFIWGALGNGFSIYVF. Residues 65–73 are Cytoplasmic-facing; it reads LKPYKKSTS. A helical membrane pass occupies residues 74-94; the sequence is VNVFMLNLAISDLLFTITLPF. Topologically, residues 95 to 124 are extracellular; sequence RVDYYLRGSNXIFGDTPCRIMSYSMYVNMY. A disulfide bond links Cys-112 and Cys-188. The chain crosses the membrane as a helical span at residues 125–145; sequence SSIYFLTVLSVVRFLATVHPF. The Cytoplasmic portion of the chain corresponds to 146-154; it reads RLLHTTSIK. Residues 155 to 175 form a helical membrane-spanning segment; that stretch reads NAWILCGVIWIFIMASSTVLL. Residues 176–205 lie on the Extracellular side of the membrane; the sequence is KNGSEQKDNVTLCLELNSNKVTKLKTMNYV. N-linked (GlcNAc...) asparagine glycosylation is found at Asn-177 and Asn-184. The helical transmembrane segment at 206–226 threads the bilayer; the sequence is ALVVGFVLPFGTLSICYLLII. Topologically, residues 227 to 246 are cytoplasmic; the sequence is RALLKVEVPESGLRLSHRKA. A helical membrane pass occupies residues 247–267; it reads LITVIIALIIFLLCFLPYHVL. Residues 268 to 287 are Extracellular-facing; sequence RTLHLLEWKADKCKDRLHKA. A helical membrane pass occupies residues 288–308; sequence VAVTLALAAANSCFNPFLYYF. At 309–345 the chain is on the cytoplasmic side; sequence AGENFKDRLKSALRKGRPQKTRCGFSVCVWLKKETRV.

It belongs to the G-protein coupled receptor 1 family.

It localises to the cell membrane. Its function is as follows. Receptor for cysteinyl leukotrienes. The response is mediated via a G-protein that activates a phosphatidylinositol-calcium second messenger system. The protein is Cysteinyl leukotriene receptor 2 (CYSLTR2) of Sus scrofa (Pig).